Reading from the N-terminus, the 342-residue chain is Ribosomal RNA small subunit methyltransferase C (342 aa).

It belongs to the methyltransferase superfamily. RsmC family. Monomer.

The protein localises to the cytoplasm. The catalysed reaction is guanosine(1207) in 16S rRNA + S-adenosyl-L-methionine = N(2)-methylguanosine(1207) in 16S rRNA + S-adenosyl-L-homocysteine + H(+). In terms of biological role, specifically methylates the guanine in position 1207 of 16S rRNA in the 30S particle. The protein is Ribosomal RNA small subunit methyltransferase C of Shewanella sp. (strain MR-7).